Here is a 666-residue protein sequence, read N- to C-terminus: SNARE-interacting protein KEULE (666 aa).

Residues 340 to 377 are a coiled coil; that stretch reads KNKAAQLQGKRDGAELSTRDLQKMVQALPQYSEQIDKL. The interval 534-589 is disordered; the sequence is KEDFPCMNDPSPSFHGSTSLSSAASSSQGQAAQSMRSRRTPTWAKPRGSDDGYSSD. The segment covering 550 to 568 has biased composition (low complexity); the sequence is STSLSSAASSSQGQAAQSM.

Belongs to the STXBP/unc-18/SEC1 family. Binds the syntaxin KNOLLE. Interacts with SEC6. In terms of tissue distribution, expressed throughout the plant, both in mitotically active and quiescent cells. Enriched in dividing tissues.

The protein localises to the cytoplasm. Its subcellular location is the membrane. The protein resides in the cytoskeleton. It is found in the phragmoplast. Functionally, regulator of vesicle trafficking involved in cytokinesis and root hair development, but not required for cell elongation. The polypeptide is SNARE-interacting protein KEULE (KEU) (Arabidopsis thaliana (Mouse-ear cress)).